A 572-amino-acid chain; its full sequence is Putative carbohydrate transport ATP-binding protein MPN_258 (572 aa).

ABC transporter domains lie at 6-253 and 327-572; these read FRME…MGKE and RFIR…LIMQ. Residue 40–47 participates in ATP binding; sequence GENGAGKS.

It belongs to the ABC transporter superfamily.

It localises to the cell membrane. Part of the ABC transporter complex involved in carbohydrates import. Probably responsible for energy coupling to the transport system. The sequence is that of Putative carbohydrate transport ATP-binding protein MPN_258 from Mycoplasma pneumoniae (strain ATCC 29342 / M129 / Subtype 1) (Mycoplasmoides pneumoniae).